The sequence spans 666 residues: Calcium/calmodulin-dependent protein kinase type II subunit beta (666 aa).

The Protein kinase domain occupies 14–272 (YQLYEDIGKG…AHEALKHPWV (259 aa)). Tyr-17 carries the phosphotyrosine modification. ATP contacts are provided by residues 20–28 (IGKGAFSVV) and Lys-43. Catalysis depends on Asp-136, which acts as the Proton acceptor. The autoinhibitory domain stretch occupies residues 283–292 (HRQETVECLK). Thr-287 carries the phosphothreonine; by autocatalysis modification. The segment at 291–301 (LKKFNARRKLK) is calmodulin-binding. Phosphothreonine; by autocatalysis occurs at positions 306 and 307. The disordered stretch occupies residues 349–534 (ADGVKPQTNS…IPGPLPTPSR (186 aa)). Positions 354–369 (PQTNSTKNSAAATSPK) are enriched in polar residues. Phosphoserine is present on residues Ser-367, Ser-394, and Ser-397. Phosphothreonine is present on residues Thr-400 and Thr-401. Over residues 432-447 (LPCPSPAPFSPLPAPS) the composition is skewed to pro residues. The span at 479 to 491 (SPALLGPLSSPSP) shows a compositional bias: low complexity. Over residues 514–531 (PVGPPPCPSPTIPGPLPT) the composition is skewed to pro residues.

Belongs to the protein kinase superfamily. CAMK Ser/Thr protein kinase family. CaMK subfamily. As to quaternary structure, CAMK2 is composed of 4 different chains: alpha (CAMK2A), beta (CAMK2B), gamma (CAMK2G), and delta (CAMK2D). The different isoforms assemble into homo- or heteromultimeric holoenzymes composed of 12 subunits with two hexameric rings stacked one on top of the other. Interacts with SYNGAP1 and CAMK2N2. Interacts with MPDZ. Interacts with FOXO3. Interacts (when in a kinase inactive state not associated with calmodulin) with ARC; leading to target ARC to inactive synapses. Interacts with CAMK2N1; this interaction requires CAMK2B activation by Ca(2+). In terms of processing, autophosphorylation of Thr-287 following activation by Ca(2+)/calmodulin. Phosphorylation of Thr-287 locks the kinase into an activated state. In terms of tissue distribution, widely expressed. Expressed in adult and fetal brain. Expression is slightly lower in fetal brain. Expressed in skeletal muscle.

The protein localises to the cytoplasm. It localises to the cytoskeleton. Its subcellular location is the microtubule organizing center. It is found in the centrosome. The protein resides in the sarcoplasmic reticulum membrane. The protein localises to the synapse. It carries out the reaction L-seryl-[protein] + ATP = O-phospho-L-seryl-[protein] + ADP + H(+). It catalyses the reaction L-threonyl-[protein] + ATP = O-phospho-L-threonyl-[protein] + ADP + H(+). With respect to regulation, activated by Ca(2+)/calmodulin. Binding of calmodulin results in conformational change that relieves intrasteric autoinhibition and allows autophosphorylation of Thr-287 which turns the kinase in a constitutively active form and confers to the kinase a Ca(2+)-independent activity. Calcium/calmodulin-dependent protein kinase that functions autonomously after Ca(2+)/calmodulin-binding and autophosphorylation, and is involved in dendritic spine and synapse formation, neuronal plasticity and regulation of sarcoplasmic reticulum Ca(2+) transport in skeletal muscle. In neurons, plays an essential structural role in the reorganization of the actin cytoskeleton during plasticity by binding and bundling actin filaments in a kinase-independent manner. This structural function is required for correct targeting of CaMK2A, which acts downstream of NMDAR to promote dendritic spine and synapse formation and maintain synaptic plasticity which enables long-term potentiation (LTP) and hippocampus-dependent learning. In developing hippocampal neurons, promotes arborization of the dendritic tree and in mature neurons, promotes dendritic remodeling. Also regulates the migration of developing neurons. Participates in the modulation of skeletal muscle function in response to exercise. In slow-twitch muscles, is involved in regulation of sarcoplasmic reticulum (SR) Ca(2+) transport and in fast-twitch muscle participates in the control of Ca(2+) release from the SR through phosphorylation of triadin, a ryanodine receptor-coupling factor, and phospholamban (PLN/PLB), an endogenous inhibitor of SERCA2A/ATP2A2. In response to interferon-gamma (IFN-gamma) stimulation, catalyzes phosphorylation of STAT1, stimulating the JAK-STAT signaling pathway. Phosphorylates reticulophagy regulator RETREG1 at 'Ser-151' under endoplasmic reticulum stress conditions which enhances RETREG1 oligomerization and its membrane scission and reticulophagy activity. This Homo sapiens (Human) protein is Calcium/calmodulin-dependent protein kinase type II subunit beta (CAMK2B).